The sequence spans 117 residues: Nascent polypeptide-associated complex protein (117 aa).

Residues 3–72 (PVNPRDLEKM…YTVEKPREET (70 aa)) enclose the NAC-A/B domain.

Belongs to the NAC-alpha family. In terms of assembly, homodimer. Interacts with the ribosome. Binds ribosomal RNA.

Functionally, contacts the emerging nascent chain on the ribosome. This is Nascent polypeptide-associated complex protein from Aeropyrum pernix (strain ATCC 700893 / DSM 11879 / JCM 9820 / NBRC 100138 / K1).